A 70-amino-acid polypeptide reads, in one-letter code: Biotin carboxyl carrier protein of acetyl-CoA carboxylase (70 aa).

The 69-residue stretch at 1 to 69 (GTVVAPMVGL…QDGIKLFALK (69 aa)) folds into the Biotinyl-binding domain. Lys35 carries the post-translational modification N6-biotinyllysine.

It is found in the plastid. It localises to the chloroplast. It participates in lipid metabolism; fatty acid biosynthesis. Its function is as follows. This protein is a component of the acetyl coenzyme A carboxylase complex; first, biotin carboxylase catalyzes the carboxylation of the carrier protein and then the transcarboxylase transfers the carboxyl group to form malonyl-CoA. The chain is Biotin carboxyl carrier protein of acetyl-CoA carboxylase from Solanum lycopersicum (Tomato).